A 176-amino-acid chain; its full sequence is Translation initiation factor IF-3 (176 aa).

It belongs to the IF-3 family. In terms of assembly, monomer.

It localises to the cytoplasm. Its function is as follows. IF-3 binds to the 30S ribosomal subunit and shifts the equilibrium between 70S ribosomes and their 50S and 30S subunits in favor of the free subunits, thus enhancing the availability of 30S subunits on which protein synthesis initiation begins. This chain is Translation initiation factor IF-3, found in Nitratidesulfovibrio vulgaris (strain ATCC 29579 / DSM 644 / CCUG 34227 / NCIMB 8303 / VKM B-1760 / Hildenborough) (Desulfovibrio vulgaris).